A 492-amino-acid chain; its full sequence is MKQKCVLIITDGIGYNKNSKFNAFEAAKKPSYEKLFKEVPNSLLKTSGLAVGLPEGQMGNSEVGHMCIGSGRIIYQNLVRINKAIENKELEKNENLQKLLAKCKRVHIIGLYSDGGVHSMDTHFKAMLEICAKNGNEVFAHAITDGRDVSPKSGLNFIKDLKGFCENLGVHFATLCGRFYAMDRDKRWDRVKEYYECLLGKAYKVPNLLEYLQKSYDENVTDEFIKAAQNENYKGMREEDGIIFINFRNDRMKQLVEVLNSKDFKEFEREKIFENLLTMSVYDDKFKLPVLFEKEKIENTLAQVISKAGLSQLHTAETEKYAHVTFFFNGGKEELLENETRVLIPSPKVKTYDEKPQMSAFEVCDAVKKGIEKGEDFIVVNFANGDMVGHTGDFNAAIKAVEAVDTCLGEIIECAKKHDYAFIITSDHGNCEAMQDEKGNLLTNHTTFDVFVFVQAKGVSKIKDNMGLSNIAASVLKILDLEIPKEMNEALF.

2 residues coordinate Mn(2+): Asp-11 and Ser-61. The Phosphoserine intermediate role is filled by Ser-61. Substrate-binding positions include His-118, 147-148 (RD), Arg-178, Arg-184, 248-251 (RNDR), and Lys-320. Asp-386, His-390, Asp-427, His-428, and His-445 together coordinate Mn(2+).

This sequence belongs to the BPG-independent phosphoglycerate mutase family. In terms of assembly, monomer. Mn(2+) serves as cofactor.

It catalyses the reaction (2R)-2-phosphoglycerate = (2R)-3-phosphoglycerate. It functions in the pathway carbohydrate degradation; glycolysis; pyruvate from D-glyceraldehyde 3-phosphate: step 3/5. In terms of biological role, catalyzes the interconversion of 2-phosphoglycerate and 3-phosphoglycerate. The protein is 2,3-bisphosphoglycerate-independent phosphoglycerate mutase of Campylobacter jejuni (strain RM1221).